The primary structure comprises 269 residues: Undecaprenyl-diphosphatase (269 aa).

8 helical membrane passes run 1 to 21, 40 to 59, 87 to 107, 117 to 137, 147 to 166, 188 to 208, 220 to 240, and 248 to 268; these read MDIMHAAVLGILQGLTEILPI, GLTFDVGLHVGTLIALCVYF, FFIIAGTVPAAIAGKTLEKPI, LIALLLIAFGLLLALADTTGP, LRGALLIGLAQCLALIPGVS, FSFLLSLPIVAGAGILKMGEL, PLLAGMATSAVSGYLGVALLL, and LYPFVWYRLLAGGAVLAYLFA.

It belongs to the UppP family.

It localises to the cell inner membrane. The enzyme catalyses di-trans,octa-cis-undecaprenyl diphosphate + H2O = di-trans,octa-cis-undecaprenyl phosphate + phosphate + H(+). Catalyzes the dephosphorylation of undecaprenyl diphosphate (UPP). Confers resistance to bacitracin. The sequence is that of Undecaprenyl-diphosphatase from Geobacter sulfurreducens (strain ATCC 51573 / DSM 12127 / PCA).